The primary structure comprises 461 residues: Asparagine--tRNA ligase (461 aa).

This sequence belongs to the class-II aminoacyl-tRNA synthetase family. Homodimer.

It is found in the cytoplasm. It catalyses the reaction tRNA(Asn) + L-asparagine + ATP = L-asparaginyl-tRNA(Asn) + AMP + diphosphate + H(+). The polypeptide is Asparagine--tRNA ligase (Nitratidesulfovibrio vulgaris (strain ATCC 29579 / DSM 644 / CCUG 34227 / NCIMB 8303 / VKM B-1760 / Hildenborough) (Desulfovibrio vulgaris)).